The sequence spans 1140 residues: Receptor-type guanylate cyclase gcy-3 (1140 aa).

The N-terminal stretch at 1 to 21 (MKNVFQLLIPLFFHLFSLVSL) is a signal peptide. Residues 22–495 (QNIPVSTGTT…CPLPFWEQYG (474 aa)) lie on the Extracellular side of the membrane. N220, N301, N349, N385, N418, N441, and N459 each carry an N-linked (GlcNAc...) asparagine glycan. The chain crosses the membrane as a helical span at residues 496 to 516 (ILIFVGAGVFLIMITTNLICF). Residues 517 to 1140 (LFMIKNRREE…RQYKMDTLKI (624 aa)) are Cytoplasmic-facing. A Protein kinase domain is found at 538–826 (FVKLRELERK…NICEQLRDLM (289 aa)). Residues 544 to 552 (LERKSKGTS) and K582 contribute to the ATP site. One can recognise a Guanylate cyclase domain in the interval 897–1027 (TVFFSDVVKF…DTVNTASRME (131 aa)). The tract at residues 1083–1140 (PSISNRSTPPVTQERFTVRAPDTPEARSVSSHGSRPSSNHNNNNDPLYRQYKMDTLKI) is disordered. The segment covering 1084 to 1097 (SISNRSTPPVTQER) has biased composition (polar residues). The segment covering 1109-1126 (RSVSSHGSRPSSNHNNNN) has biased composition (low complexity).

It belongs to the adenylyl cyclase class-4/guanylyl cyclase family. In terms of tissue distribution, expressed asymmetrically in ASE right (ASER) sensory neuron and bilaterally in ASI sensory neurons. Expressed in PVT interneuron.

It is found in the cell membrane. The enzyme catalyses GTP = 3',5'-cyclic GMP + diphosphate. Its function is as follows. Guanylate cyclase involved in the production of the second messenger cGMP. This Caenorhabditis elegans protein is Receptor-type guanylate cyclase gcy-3.